Reading from the N-terminus, the 806-residue chain is Transitional endoplasmic reticulum ATPase (806 aa).

Alanine 2 carries the post-translational modification N-acetylalanine. Residues serine 3 and serine 7 each carry the phosphoserine modification. A Glycyl lysine isopeptide (Lys-Gly) (interchain with G-Cter in SUMO2) cross-link involves residue lysine 8. Serine 13 is subject to Phosphoserine. Lysine 18 is covalently cross-linked (Glycyl lysine isopeptide (Lys-Gly) (interchain with G-Cter in SUMO2)). Serine 37 bears the Phosphoserine mark. 247–253 (PGTGKTL) serves as a coordination point for ATP. An N6,N6,N6-trimethyllysine; by VCPKMT modification is found at lysine 315. Residues asparagine 348 and histidine 384 each contribute to the ATP site. The residue at position 436 (threonine 436) is a Phosphothreonine. Serine 462 is modified (phosphoserine). 2 positions are modified to N6-acetyllysine: lysine 502 and lysine 505. ATP is bound at residue 521–526 (GCGKTL). Lysine 668 is subject to N6-acetyllysine; alternate. Lysine 668 is modified (N6-succinyllysine; alternate). Residue serine 702 is modified to Phosphoserine. The disordered stretch occupies residues 708–727 (RRERERQTNPSAMEVEEDDP). Position 754 is an N6-acetyllysine (lysine 754). A disordered region spans residues 768–806 (FGSFRFPSGNQGGAGPSQGSGGGTGGNVYTEDNDDDLYG). Phosphoserine occurs at positions 770, 775, and 787. Over residues 777-793 (NQGGAGPSQGSGGGTGG) the composition is skewed to gly residues. Residues 797–806 (TEDNDDDLYG) form an interaction with UBXN6 region. A PIM motif motif is present at residues 802 to 806 (DDLYG). Residue tyrosine 805 is modified to Phosphotyrosine.

It belongs to the AAA ATPase family. In terms of assembly, homohexamer. Forms a ring-shaped particle of 12.5 nm diameter, that displays 6-fold radial symmetry. Interacts with NSFL1C-like protein p37; the complex has membrane fusion activity and is required for Golgi and endoplasmic reticulum biogenesis. Interacts with RHBDD1 (via C-terminal domain). Interacts with SELENOS and SYVN1, as well as with DERL1 (via SHP-box motif), DERL2 and DERL3; which probably transfer misfolded proteins from the ER to VCP. Interacts with SVIP and DERL1. Component of a complex required to couple retrotranslocation, ubiquitination and deglycosylation composed of NGLY1, SAKS1, AMFR, VCP and RAD23B. Part of a complex composed of STUB1/CHIP, VCP/p97, CHRNA3, and UBXN2A that modulates the ubiquitination and endoplasmic reticulum-associated degradation (ERAD) of CHRNA3. Within the complex UBXN2A acts as a scaffold protein required for the interaction of CHRNA3 with VCP/p97, this interaction also inhibits CHRNA3 ubiquitination by STUB1/CHIP and subsequently ERAD. Interacts with UBXN2A (via UBX domain); the interaction is required for the interaction of CHRNA3 in the STUB1-VCP-UBXN2A complex. Directly interacts with UBXN4 and RNF19A. Interacts with CASR. Interacts with UBE4B and YOD1. Interacts with clathrin. Interacts with RNF103. Interacts with TRIM13 and TRIM21. Component of a VCP/p97-AMFR/gp78 complex that participates in the final step of the endoplasmic reticulum-associated degradation (ERAD) of HMGCR. Interacts directly with AMFR/gp78 (via its VIM). Interacts with SPRTN; leading to recruitment to stalled replication forks. Part of a ternary complex containing STX5A, NSFL1C and VCP. NSFL1C forms a homotrimer that binds to one end of a VCP homohexamer. The complex binds to membranes enriched in phosphatidylethanolamine-containing lipids and promotes Golgi membrane fusion. Binds to a heterodimer of NPLOC4 and UFD1, binding to this heterodimer inhibits Golgi-membrane fusion. Interaction with VCIP135 leads to dissociation of the complex via ATP hydrolysis by VCP. Part of a ternary complex containing NPLOC4, UFD1 and VCP. Interacts with WASHC5. Interacts with UBOX5. Interacts (via N-terminus) with UBXN7, UBXN8, and probably several other UBX domain-containing proteins (via UBX domains); the interactions are mutually exclusive with VIM-dependent interactions such as those with AMFR and SELENOS. Forms a complex with UBQLN1 and UBXN4. Interacts (via the PIM motif) with RNF31 (via the PUB domain). Interacts with RIGI and RNF125; interaction takes place when RIGI is ubiquitinated via 'Lys-63'-linked ubiquitin on its CARD domains, leading to recruit RNF125 and promote ubiquitination and degradation of RIGI. Interacts with BAG6. Interacts with UBXN10. Interacts with UBXN6; the interaction with UBXN6 is direct and competitive with UFD1. Forms a ternary complex with CAV1 and UBXN6. Interacts with PLAA, UBXN6 and YOD1; may form a complex involved in macroautophagy. Interacts with ANKZF1. Interacts with ubiquitin-binding protein FAF1. Interacts with ZFAND2B (via VIM motif); the interaction is direct. Interacts with ZFAND1 (via its ubiquitin-like region); this interaction occurs in an arsenite-dependent manner. Interacts with CCDC47. Interacts with LMBR1L and UBAC2. Interacts with ATXN3. Interacts with TEX264; bridging VCP to covalent DNA-protein cross-links (DPCs). In terms of processing, phosphorylated by tyrosine kinases in response to T-cell antigen receptor activation. Phosphorylated in mitotic cells. ISGylated. Post-translationally, methylation at Lys-315 catalyzed by VCPKMT is increased in the presence of ASPSCR1. Lys-315 methylation may decrease ATPase activity.

Its subcellular location is the cytoplasm. The protein localises to the cytosol. The protein resides in the endoplasmic reticulum. It is found in the nucleus. It localises to the stress granule. It catalyses the reaction ATP + H2O = ADP + phosphate + H(+). Its function is as follows. Necessary for the fragmentation of Golgi stacks during mitosis and for their reassembly after mitosis. Involved in the formation of the transitional endoplasmic reticulum (tER). The transfer of membranes from the endoplasmic reticulum to the Golgi apparatus occurs via 50-70 nm transition vesicles which derive from part-rough, part-smooth transitional elements of the endoplasmic reticulum (tER). Vesicle budding from the tER is an ATP-dependent process. The ternary complex containing UFD1, VCP and NPLOC4 binds ubiquitinated proteins and is necessary for the export of misfolded proteins from the ER to the cytoplasm, where they are degraded by the proteasome. The NPLOC4-UFD1-VCP complex regulates spindle disassembly at the end of mitosis and is necessary for the formation of a closed nuclear envelope. Regulates E3 ubiquitin-protein ligase activity of RNF19A. Component of the VCP/p97-AMFR/gp78 complex that participates in the final step of the sterol-mediated ubiquitination and endoplasmic reticulum-associated degradation (ERAD) of HMGCR. Mediates the endoplasmic reticulum-associated degradation of CHRNA3 in cortical neurons as part of the STUB1-VCP-UBXN2A complex. Involved in endoplasmic reticulum stress-induced pre-emptive quality control, a mechanism that selectively attenuates the translocation of newly synthesized proteins into the endoplasmic reticulum and reroutes them to the cytosol for proteasomal degradation. Involved in clearance process by mediating G3BP1 extraction from stress granules. Also involved in DNA damage response: recruited to double-strand breaks (DSBs) sites in a RNF8- and RNF168-dependent manner and promotes the recruitment of TP53BP1 at DNA damage sites. Recruited to stalled replication forks by SPRTN: may act by mediating extraction of DNA polymerase eta (POLH) to prevent excessive translesion DNA synthesis and limit the incidence of mutations induced by DNA damage. Together with SPRTN metalloprotease, involved in the repair of covalent DNA-protein cross-links (DPCs) during DNA synthesis. Involved in interstrand cross-link repair in response to replication stress by mediating unloading of the ubiquitinated CMG helicase complex. Mediates extraction of PARP1 trapped to chromatin: recognizes and binds ubiquitinated PARP1 and promotes its removal. Required for cytoplasmic retrotranslocation of stressed/damaged mitochondrial outer-membrane proteins and their subsequent proteasomal degradation. Essential for the maturation of ubiquitin-containing autophagosomes and the clearance of ubiquitinated protein by autophagy. Acts as a negative regulator of type I interferon production by interacting with RIGI: interaction takes place when RIGI is ubiquitinated via 'Lys-63'-linked ubiquitin on its CARD domains, leading to recruit RNF125 and promote ubiquitination and degradation of RIGI. May play a role in the ubiquitin-dependent sorting of membrane proteins to lysosomes where they undergo degradation. May more particularly play a role in caveolins sorting in cells. By controlling the steady-state expression of the IGF1R receptor, indirectly regulates the insulin-like growth factor receptor signaling pathway. This is Transitional endoplasmic reticulum ATPase (Vcp) from Rattus norvegicus (Rat).